We begin with the raw amino-acid sequence, 121 residues long: Dihydroneopterin aldolase (121 aa).

Substrate is bound by residues Glu16 and Met111.

Belongs to the archaeal dihydroneopterin aldolase family. Homotetramer.

The enzyme catalyses 7,8-dihydroneopterin = 6-hydroxymethyl-7,8-dihydropterin + glycolaldehyde. Its pathway is cofactor biosynthesis; 5,6,7,8-tetrahydromethanopterin biosynthesis. Functionally, catalyzes the conversion of 7,8-dihydroneopterin (H2Neo) to 6-hydroxymethyl-7,8-dihydropterin (6-HMD). This chain is Dihydroneopterin aldolase, found in Methanopyrus kandleri (strain AV19 / DSM 6324 / JCM 9639 / NBRC 100938).